The chain runs to 390 residues: 5-hydroxytryptamine receptor 1B (390 aa).

At 1–46 (MEEPGAQCAPPXPAGSETWVPQANLSSAPSQNCSAKDYIYQDSIAL) the chain is on the extracellular side. Residues Asn-24 and Asn-32 are each glycosylated (N-linked (GlcNAc...) asparagine). A helical membrane pass occupies residues 47 to 72 (PWKVLLVMLLALITLATTLSNAFVIA). Residues 73 to 86 (TVYRTRKLHTPANY) lie on the Cytoplasmic side of the membrane. A helical membrane pass occupies residues 87 to 111 (LIASLAVTDLLVSILVMPISTMYTV). The Extracellular portion of the chain corresponds to 112 to 119 (TGRWTLGQ). The helical transmembrane segment at 120 to 145 (VVCDFWLSSDITCCTASILHLCVIAL) threads the bilayer. Residues Cys-122 and Cys-199 are joined by a disulfide bond. Ergotamine contacts are provided by Asp-129 and Thr-134. The short motif at 146-148 (DRY) is the DRY motif; important for ligand-induced conformation changes and signaling element. Residues 146–165 (DRYWAITDAVEYSAKRTPKR) are Cytoplasmic-facing. A helical transmembrane segment spans residues 166–184 (AAVMIALVWVFSISISLPP). Residues 185–205 (FFWRQAKAEEEVSECVVNTDH) lie on the Extracellular side of the membrane. Val-201 is a binding site for ergotamine. A helical transmembrane segment spans residues 206–229 (ILYTVYSTVGAFYFPTLLLIALYG). Topologically, residues 230–315 (RIYVEARSRI…AARERKATKT (86 aa)) are cytoplasmic. Polar residues predominate over residues 259-272 (DSPGSTSSVTSINS). The tract at residues 259–281 (DSPGSTSSVTSINSRVPDVPSES) is disordered. The helical transmembrane segment at 316–337 (LGIILGAFIVCWLPFFIISLVM) threads the bilayer. At 338–347 (PICKDACWFH) the chain is on the extracellular side. Residues 348–370 (LAIFDFFTWLGYLNSLINPIIYT) traverse the membrane as a helical segment. The NPxxY motif; important for ligand-induced conformation changes and signaling signature appears at 365 to 369 (NPIIY). The Cytoplasmic segment spans residues 371–390 (MSNEDFKQAFHKLIRFKCTS). A lipid anchor (S-palmitoyl cysteine) is attached at Cys-388.

This sequence belongs to the G-protein coupled receptor 1 family. In terms of assembly, homodimer. Heterodimer with HTR1D. Post-translationally, phosphorylated. Desensitization of the receptor may be mediated by its phosphorylation. Palmitoylated.

Its subcellular location is the cell membrane. Its function is as follows. G-protein coupled receptor for 5-hydroxytryptamine (serotonin). Also functions as a receptor for ergot alkaloid derivatives, various anxiolytic and antidepressant drugs and other psychoactive substances, such as lysergic acid diethylamide (LSD). Ligand binding causes a conformation change that triggers signaling via guanine nucleotide-binding proteins (G proteins) and modulates the activity of downstream effectors, such as adenylate cyclase. HTR1B is coupled to G(i)/G(o) G alpha proteins and mediates inhibitory neurotransmission by inhibiting adenylate cyclase activity. Arrestin family members inhibit signaling via G proteins and mediate activation of alternative signaling pathways. Regulates the release of 5-hydroxytryptamine, dopamine and acetylcholine in the brain, and thereby affects neural activity, nociceptive processing, pain perception, mood and behavior. Besides, plays a role in vasoconstriction of cerebral arteries. The protein is 5-hydroxytryptamine receptor 1B (HTR1B) of Gorilla gorilla gorilla (Western lowland gorilla).